The following is a 496-amino-acid chain: Cytochrome P450 monooxygenase cle4 (496 aa).

The helical transmembrane segment at 12 to 34 threads the bilayer; sequence FFTSPFPLTVGILSISLSGVLWY. Position 435 (Cys435) interacts with heme.

This sequence belongs to the cytochrome P450 family. It depends on heme as a cofactor.

Its subcellular location is the membrane. Its pathway is secondary metabolite biosynthesis; terpenoid biosynthesis. Functionally, cytochrome P450 monooxygenase; part of the cluster A that mediates the biosynthesis of chevalone E and its oxidized derivatives that possess a unique five-membered lactone ring and can synergistically enhance the cytotoxicity of doxorubicin (DOX) in breast cancer cells. Within the pathway, cle4 is involved in hydroxylation of the chavalone E scaffold at positions C-11 and C-12 and contributes with cle2 to the production of seven oxidation derivatives. The molecular scaffold is commonly biosynthesized by a series of enzymes including the non-reducing polyketide synthase (NR-PKS) cle1 that produces the alpha-pyrone triacetic acid lactone (TAL); The membrane-bound prenyltransferase cle5 that accepts TAL as its substrate to perform a C-3 geranylgeranylation reaction, in which the pathway-dedicated GGPS cle6 is required to provide GGPP, the other substrate of cle5; the FAD-dependent monooxygenase Cle3 that forms an (S)-epoxide ring at the terminal olefin of the geranylgeranyl group; and the terpene cyclase Cle7 that catalyzes the cyclization of the prenyl group that yields the pentacyclic pathway intermediate chevalone E. Chevalone E can derivatize into seven new oxidized analogs by the cytochrome P450 monooxygenases cle2 (acting at C-20) and cle4 (acting at C-11 and C-12). In Aspergillus versicolor, this protein is Cytochrome P450 monooxygenase cle4.